Consider the following 510-residue polypeptide: Indoleacetate--CoA ligase (510 aa).

The protein belongs to the ATP-dependent AMP-binding enzyme family. In terms of assembly, monomer.

It carries out the reaction (indol-3-yl)acetate + ATP + CoA = (indol-3-yl)acetyl-CoA + AMP + diphosphate. The enzyme catalyses (indol-3-yl)acetate + ATP + H(+) = (indol-3-yl)acetyl-AMP + diphosphate. It catalyses the reaction (indol-3-yl)acetyl-AMP + CoA = (indol-3-yl)acetyl-CoA + AMP + H(+). Inhibited by high concentrations of substrates, and by the synthetic auxin compound 2,4-dichlorophenoxyacetate (2,4-D), which does not serve as substrate. Functionally, involved in degradation of indoleacetate, the most common member of the auxin class of plant hormones. Highly specific indoleacetate-CoA ligase which catalyzes the ATP-dependent activation of indoleacetate (IAA) to indoleacetyl-CoA. Also activates some closely related compounds such as the non-physiological compound (2-naphthyl)acetate and phenylacetate, which seems to be a fortuitous substrate for IaaB. This Aromatoleum aromaticum (strain DSM 19018 / LMG 30748 / EbN1) (Azoarcus sp. (strain EbN1)) protein is Indoleacetate--CoA ligase.